A 230-amino-acid polypeptide reads, in one-letter code: Exosome complex component Rrp4 (230 aa).

Residues 60-129 (NDKVIGKVID…EIKESWLSLK (70 aa)) form the S1 motif domain. Residues 137–195 (EEGSIIYIKAPKVPRVIGKAGNMINMIKSETNTKIIVGQNGLIWIDGEPENVDLAINAI) form the KH domain.

The protein belongs to the RRP4 family. As to quaternary structure, component of the archaeal exosome complex. Forms a trimer of Rrp4 and/or Csl4 subunits. The trimer associates with a hexameric ring-like arrangement composed of 3 Rrp41-Rrp42 heterodimers.

It is found in the cytoplasm. Its function is as follows. Non-catalytic component of the exosome, which is a complex involved in RNA degradation. Increases the RNA binding and the efficiency of RNA degradation. Confers strong poly(A) specificity to the exosome. The chain is Exosome complex component Rrp4 from Picrophilus torridus (strain ATCC 700027 / DSM 9790 / JCM 10055 / NBRC 100828 / KAW 2/3).